A 106-amino-acid polypeptide reads, in one-letter code: ATP-dependent Clp protease adapter protein ClpS (106 aa).

Belongs to the ClpS family. Binds to the N-terminal domain of the chaperone ClpA.

Involved in the modulation of the specificity of the ClpAP-mediated ATP-dependent protein degradation. This is ATP-dependent Clp protease adapter protein ClpS from Vibrio cholerae serotype O1 (strain ATCC 39541 / Classical Ogawa 395 / O395).